The primary structure comprises 676 residues: DNA-directed RNA polymerase subunit beta' (676 aa).

Positions 69, 71, 87, and 90 each coordinate Zn(2+). D485, D487, and D489 together coordinate Mg(2+).

It belongs to the RNA polymerase beta' chain family. RpoC1 subfamily. As to quaternary structure, in plastids the minimal PEP RNA polymerase catalytic core is composed of four subunits: alpha, beta, beta', and beta''. When a (nuclear-encoded) sigma factor is associated with the core the holoenzyme is formed, which can initiate transcription. Mg(2+) is required as a cofactor. Requires Zn(2+) as cofactor.

The protein resides in the plastid. Its subcellular location is the chloroplast. It carries out the reaction RNA(n) + a ribonucleoside 5'-triphosphate = RNA(n+1) + diphosphate. Its function is as follows. DNA-dependent RNA polymerase catalyzes the transcription of DNA into RNA using the four ribonucleoside triphosphates as substrates. This Fagopyrum esculentum subsp. ancestrale (Wild buckwheat) protein is DNA-directed RNA polymerase subunit beta'.